A 313-amino-acid chain; its full sequence is NF-kappa-B inhibitor delta (313 aa).

6 ANK repeats span residues 48–83, 84–113, 117–146, 152–201, 206–236, and 243–276; these read EGDT…IREH, KGKT…EPNA, QGRS…QVDL, EGLT…NHTS, SNKT…DLRT, and HGNT…DPTL.

The protein belongs to the NF-kappa-B inhibitor family. As to quaternary structure, interacts with NFKB1, RELA and RELB; in the nucleus.

The protein localises to the nucleus. In terms of biological role, regulates the expression of IL-2, IL-6, and other cytokines through regulation on NF-kappa-B activity. Functions in the regulation of inflammatory responses. Involved in the induction of T helper 17 cells (Th17) differentiation upon recognition of antigen by T cell antigen receptor (TCR). May also regulate TCR-induced negative selection of thymocytes. This is NF-kappa-B inhibitor delta (NFKBID) from Homo sapiens (Human).